The sequence spans 545 residues: Chaperonin GroEL (545 aa).

Residues 29-32 (TLGP), Lys-50, 86-90 (DGTTT), Gly-413, and Asp-495 each bind ATP.

This sequence belongs to the chaperonin (HSP60) family. As to quaternary structure, forms a cylinder of 14 subunits composed of two heptameric rings stacked back-to-back. Interacts with the co-chaperonin GroES.

The protein resides in the cytoplasm. It catalyses the reaction ATP + H2O + a folded polypeptide = ADP + phosphate + an unfolded polypeptide.. Functionally, together with its co-chaperonin GroES, plays an essential role in assisting protein folding. The GroEL-GroES system forms a nano-cage that allows encapsulation of the non-native substrate proteins and provides a physical environment optimized to promote and accelerate protein folding. The protein is Chaperonin GroEL of Borreliella burgdorferi (strain ATCC 35210 / DSM 4680 / CIP 102532 / B31) (Borrelia burgdorferi).